Here is a 215-residue protein sequence, read N- to C-terminus: Cytochrome b6 (215 aa).

A helical membrane pass occupies residues 32-52 (IFYCLGGITLTCFLVQVATGF). Cysteine 35 provides a ligand contact to heme c. Residues histidine 86 and histidine 100 each coordinate heme b. Transmembrane regions (helical) follow at residues 90-110 (ASMMVLMMILHVFRVYLTGGF), 116-136 (LTWITGVILAVLTVSFGVTGY), and 186-206 (LHTFVLPLLTAVFMLMHFLMI). Histidine 187 and histidine 202 together coordinate heme b.

This sequence belongs to the cytochrome b family. PetB subfamily. The 4 large subunits of the cytochrome b6-f complex are cytochrome b6, subunit IV (17 kDa polypeptide, PetD), cytochrome f and the Rieske protein, while the 4 small subunits are PetG, PetL, PetM and PetN. The complex functions as a dimer. The cofactor is heme b. Heme c serves as cofactor.

It localises to the plastid. Its subcellular location is the chloroplast thylakoid membrane. Its function is as follows. Component of the cytochrome b6-f complex, which mediates electron transfer between photosystem II (PSII) and photosystem I (PSI), cyclic electron flow around PSI, and state transitions. The sequence is that of Cytochrome b6 from Psilotum nudum (Whisk fern).